The primary structure comprises 443 residues: Protein PRRC1 (443 aa).

Disordered regions lie at residues 1 to 108 (MMEE…LSHF) and 139 to 206 (ITRG…QDDA). The segment covering 34-46 (VTSSFSSPNTSGM) has biased composition (polar residues). The segment covering 59–80 (PSLPPVQPSAPPPFVPLSPAPS) has biased composition (pro residues). Low complexity predominate over residues 81–96 (TPLSGTSVPPSVSPSP). Polar residues predominate over residues 169–188 (ITQQASMTSLAQGPGTTSAI).

Belongs to the PRRC1 family. In terms of assembly, interacts with PRKAR1A; resulting in PKA activation.

The protein localises to the golgi apparatus. It localises to the cytoplasm. Its function is as follows. May act as a regulator of the protein kinase A (PKA) during embryonic development. This is Protein PRRC1 (Prrc1) from Rattus norvegicus (Rat).